We begin with the raw amino-acid sequence, 578 residues long: Proteasome-associated ATPase (578 aa).

The stretch at 35–84 (RHLTALEEQLGAARTRLAQVSAQNDRLATTLREARDQIVALKAEVDRLGQ) forms a coiled coil. ATP is bound at residue 266 to 271 (GCGKTL). Residues 577 to 578 (YL) form a docks into pockets in the proteasome alpha-ring region.

It belongs to the AAA ATPase family. In terms of assembly, homohexamer. Assembles into a hexameric ring structure that caps the 20S proteasome core. Strongly interacts with the prokaryotic ubiquitin-like protein Pup through a hydrophobic interface; the interacting region of ARC lies in its N-terminal coiled-coil domain. There is one Pup binding site per ARC hexamer ring. Upon ATP-binding, the C-terminus of ARC interacts with the alpha-rings of the proteasome core, possibly by binding to the intersubunit pockets.

Its pathway is protein degradation; proteasomal Pup-dependent pathway. Functionally, ATPase which is responsible for recognizing, binding, unfolding and translocation of pupylated proteins into the bacterial 20S proteasome core particle. May be essential for opening the gate of the 20S proteasome via an interaction with its C-terminus, thereby allowing substrate entry and access to the site of proteolysis. Thus, the C-termini of the proteasomal ATPase may function like a 'key in a lock' to induce gate opening and therefore regulate proteolysis. In Kineococcus radiotolerans (strain ATCC BAA-149 / DSM 14245 / SRS30216), this protein is Proteasome-associated ATPase.